The following is a 748-amino-acid chain: Putative pre-mRNA-splicing factor ATP-dependent RNA helicase DHX32 (748 aa).

The 167-residue stretch at 74–240 (LEHLAHNQIV…YGNAPLVEAE (167 aa)) folds into the Helicase ATP-binding domain. 87 to 94 (AGPKSGKS) contacts ATP. The Helicase C-terminal domain occupies 263-439 (RLLFEIHHTK…SMVLFLKRMD (177 aa)). Residues 706-748 (SETKDLLQQDQTPDTPPTEEPREEEPLHEANDEGTAEQRCIIQ) form a disordered region.

This sequence belongs to the DEAD box helicase family. DEAH subfamily.

It is found in the nucleus. Its subcellular location is the mitochondrion. The catalysed reaction is ATP + H2O = ADP + phosphate + H(+). The polypeptide is Putative pre-mRNA-splicing factor ATP-dependent RNA helicase DHX32 (dhx32) (Xenopus laevis (African clawed frog)).